We begin with the raw amino-acid sequence, 500 residues long: 4-aminobutyrate aminotransferase, mitochondrial (500 aa).

A mitochondrion-targeting transit peptide spans 1–28 (MASMLVAQRLACSFQHSYRLLVPGSRHI). C163 is a [2Fe-2S] cluster binding site. 164-165 (GS) is a pyridoxal 5'-phosphate binding site. C166 contacts [2Fe-2S] cluster. Residue R220 coordinates substrate. Position 231 is an N6-succinyllysine (K231). Residue K252 is modified to N6-acetyllysine; alternate. Position 252 is an N6-succinyllysine; alternate (K252). N6-acetyllysine occurs at positions 279 and 318. Position 357 is an N6-(pyridoxal phosphate)lysine (K357). T381 provides a ligand contact to pyridoxal 5'-phosphate. Residue K413 is modified to N6-acetyllysine; alternate. At K413 the chain carries N6-succinyllysine; alternate. 2 positions are modified to N6-acetyllysine: K452 and K470.

This sequence belongs to the class-III pyridoxal-phosphate-dependent aminotransferase family. Homodimer; disulfide-linked. Requires pyridoxal 5'-phosphate as cofactor. [2Fe-2S] cluster serves as cofactor.

The protein localises to the mitochondrion matrix. The catalysed reaction is 4-aminobutanoate + 2-oxoglutarate = succinate semialdehyde + L-glutamate. It carries out the reaction (S)-3-amino-2-methylpropanoate + 2-oxoglutarate = 2-methyl-3-oxopropanoate + L-glutamate. Its function is as follows. Catalyzes the conversion of gamma-aminobutyrate and L-beta-aminoisobutyrate to succinate semialdehyde and methylmalonate semialdehyde, respectively. Can also convert delta-aminovalerate and beta-alanine. This is 4-aminobutyrate aminotransferase, mitochondrial (ABAT) from Bos taurus (Bovine).